The sequence spans 1294 residues: Phosphoribosylformylglycinamidine synthase (1294 aa).

A disordered region spans residues 303 to 325 (WPGAATGSGGEIRDEGATGRGSK). ATP is bound by residues 305 to 316 (GAATGSGGEIRD), 384 to 386 (TGY), and A676. Mg(2+) contacts are provided by D677, E716, N720, and D883. S885 serves as a coordination point for ATP. A Glutamine amidotransferase type-1 domain is found at 1041–1294 (VAVLREQGVN…MFRNARRQLG (254 aa)). Catalysis depends on C1134, which acts as the Nucleophile. Catalysis depends on residues H1259 and E1261.

In the N-terminal section; belongs to the FGAMS family. In terms of assembly, monomer.

Its subcellular location is the cytoplasm. The catalysed reaction is N(2)-formyl-N(1)-(5-phospho-beta-D-ribosyl)glycinamide + L-glutamine + ATP + H2O = 2-formamido-N(1)-(5-O-phospho-beta-D-ribosyl)acetamidine + L-glutamate + ADP + phosphate + H(+). It functions in the pathway purine metabolism; IMP biosynthesis via de novo pathway; 5-amino-1-(5-phospho-D-ribosyl)imidazole from N(2)-formyl-N(1)-(5-phospho-D-ribosyl)glycinamide: step 1/2. Phosphoribosylformylglycinamidine synthase involved in the purines biosynthetic pathway. Catalyzes the ATP-dependent conversion of formylglycinamide ribonucleotide (FGAR) and glutamine to yield formylglycinamidine ribonucleotide (FGAM) and glutamate. In Pectobacterium atrosepticum (strain SCRI 1043 / ATCC BAA-672) (Erwinia carotovora subsp. atroseptica), this protein is Phosphoribosylformylglycinamidine synthase.